Here is a 286-residue protein sequence, read N- to C-terminus: Fructose-bisphosphate aldolase (286 aa).

Ser-50 lines the D-glyceraldehyde 3-phosphate pocket. Asp-85 functions as the Proton donor in the catalytic mechanism. Positions 86, 107, 137, and 181 each coordinate Zn(2+). Gly-182 is a dihydroxyacetone phosphate binding site. Residue His-209 coordinates Zn(2+). Dihydroxyacetone phosphate contacts are provided by residues Gly-210 to Thr-212 and Asn-231 to Thr-234.

The protein belongs to the class II fructose-bisphosphate aldolase family. The cofactor is Zn(2+).

It catalyses the reaction beta-D-fructose 1,6-bisphosphate = D-glyceraldehyde 3-phosphate + dihydroxyacetone phosphate. It functions in the pathway carbohydrate degradation; glycolysis; D-glyceraldehyde 3-phosphate and glycerone phosphate from D-glucose: step 4/4. Its function is as follows. Catalyzes the aldol condensation of dihydroxyacetone phosphate (DHAP or glycerone-phosphate) with glyceraldehyde 3-phosphate (G3P) to form fructose 1,6-bisphosphate (FBP) in gluconeogenesis and the reverse reaction in glycolysis. The protein is Fructose-bisphosphate aldolase (fba) of Staphylococcus epidermidis (strain ATCC 35984 / DSM 28319 / BCRC 17069 / CCUG 31568 / BM 3577 / RP62A).